The following is a 376-amino-acid chain: tRNA-specific 2-thiouridylase MnmA (376 aa).

Residues 9–16 (AMSGGIDS) and Met35 contribute to the ATP site. Cys105 acts as the Nucleophile in catalysis. The cysteines at positions 105 and 202 are disulfide-linked. Gly129 serves as a coordination point for ATP. The tract at residues 151–153 (KDQ) is interaction with tRNA. Cys202 (cysteine persulfide intermediate) is an active-site residue. An interaction with tRNA region spans residues 312–313 (RY).

The protein belongs to the MnmA/TRMU family.

Its subcellular location is the cytoplasm. The catalysed reaction is S-sulfanyl-L-cysteinyl-[protein] + uridine(34) in tRNA + AH2 + ATP = 2-thiouridine(34) in tRNA + L-cysteinyl-[protein] + A + AMP + diphosphate + H(+). Its function is as follows. Catalyzes the 2-thiolation of uridine at the wobble position (U34) of tRNA, leading to the formation of s(2)U34. The chain is tRNA-specific 2-thiouridylase MnmA from Amoebophilus asiaticus (strain 5a2).